The primary structure comprises 212 residues: 3-isopropylmalate dehydratase small subunit 1 (212 aa).

Belongs to the LeuD family. LeuD type 1 subfamily. In terms of assembly, heterodimer of LeuC and LeuD.

It catalyses the reaction (2R,3S)-3-isopropylmalate = (2S)-2-isopropylmalate. Its pathway is amino-acid biosynthesis; L-leucine biosynthesis; L-leucine from 3-methyl-2-oxobutanoate: step 2/4. Its function is as follows. Catalyzes the isomerization between 2-isopropylmalate and 3-isopropylmalate, via the formation of 2-isopropylmaleate. This Chromobacterium violaceum (strain ATCC 12472 / DSM 30191 / JCM 1249 / CCUG 213 / NBRC 12614 / NCIMB 9131 / NCTC 9757 / MK) protein is 3-isopropylmalate dehydratase small subunit 1.